The chain runs to 372 residues: Protein phosphatase Mn(2+)-dependent 1K (372 aa).

Residues 1–29 constitute a mitochondrion transit peptide; that stretch reads MSTAALLTLVRSGGNQVRRRVLLRARGLQ. Residues 46-61 form a critical for association with the BCKDH complex region; that stretch reads KWSRFDPDGSGRPATW. The region spanning 94-346 is the PPM-type phosphatase domain; that stretch reads NVGSASQIGK…DNTTAVVVPF (253 aa). Residues Asp127 and Gly128 each coordinate Mn(2+). The residue at position 248 (Ser248) is a Phosphoserine. Mn(2+)-binding residues include Asp298 and Asp337.

Belongs to the PP2C family. In terms of assembly, monomer. Interacts with E1 and E2 components of the branched-chain alpha-ketoacid dehydrogenase (BCKDH) complex; this interaction requires colocalization in mitochondria. Interacts with BCKDHA but not with BCKDHB of the E1 component. Interacts with the 24-meric E2 core composed of DBT monomers with a 24:1 stoichiometry; the N-terminal region (residues 49-61) of PPM1K and C-terminal linker of the lipoyl domain of DBT (residues 145-160) are critical for this interaction, whereas the lipoyl prosthetic group is dispensable. Competes with BCKDK for binding to the E2 core; this interaction is modulated by branched-chain alpha-keto acids. At steady state, BCKDH holoenzyme preferentially binds BCKDK and BCKDHA is phosphorylated. In response to high levels of branched-chain alpha-keto acids, the inhibitory BCKDK is replaced by activating PPM1K leading to BCKDHA dephosphorylation and BCAA degradation. Mn(2+) is required as a cofactor.

It localises to the mitochondrion matrix. It carries out the reaction O-phospho-L-seryl-[3-methyl-2-oxobutanoate dehydrogenase] + H2O = L-seryl-[3-methyl-2-oxobutanoate dehydrogenase] + phosphate. It catalyses the reaction O-phospho-L-seryl-[protein] + H2O = L-seryl-[protein] + phosphate. It functions in the pathway protein modification. Its function is as follows. Serine/threonine-protein phosphatase component of macronutrients metabolism. Forms a functional kinase and phosphatase pair with BCKDK, serving as a metabolic regulatory node that coordinates branched-chain amino acids (BCAAs) with glucose and lipid metabolism via two distinct phosphoprotein targets: mitochondrial BCKDHA subunit of the branched-chain alpha-ketoacid dehydrogenase (BCKDH) complex and cytosolic ACLY, a lipogenic enzyme of Krebs cycle. At high levels of branched-chain ketoacids, dephosphorylates and activates mitochondrial BCKDH complex, a multisubunit complex consisting of three multimeric components each involved in different steps of BCAA catabolism: E1 composed of BCKDHA and BCKDHB, E2 core composed of DBT monomers, and E3 composed of DLD monomers. Tightly associates with the E2 component of BCKDH complex and dephosphorylates BCKDHA on Ser-347. Regulates the reversible phosphorylation of ACLY in response to changes in cellular carbohydrate abundance such as occurs during fasting to feeding metabolic transition. At fasting state, appears to dephosphorylate ACLY on Ser-455 and inactivate it. Refeeding stimulates MLXIPL/ChREBP transcription factor, leading to increased BCKDK to PPM1K expression ratio, phosphorylation and activation of ACLY that ultimately results in the generation of malonyl-CoA and oxaloacetate immediate substrates of de novo lipogenesis and gluconeogenesis, respectively. Recognizes phosphosites having SxS or RxxS motifs and strictly depends on Mn(2+) ions for the phosphatase activity. Regulates Ca(2+)-induced opening of mitochondrial transition pore and apoptotic cell death. This chain is Protein phosphatase Mn(2+)-dependent 1K (PPM1K), found in Bos taurus (Bovine).